The following is a 118-amino-acid chain: Small ribosomal subunit protein uS13 (118 aa).

Positions 93–118 (RGLPVRGQRTKTNARTRKGPRKPIRK) are disordered.

The protein belongs to the universal ribosomal protein uS13 family. Part of the 30S ribosomal subunit. Forms a loose heterodimer with protein S19. Forms two bridges to the 50S subunit in the 70S ribosome.

In terms of biological role, located at the top of the head of the 30S subunit, it contacts several helices of the 16S rRNA. In the 70S ribosome it contacts the 23S rRNA (bridge B1a) and protein L5 of the 50S subunit (bridge B1b), connecting the 2 subunits; these bridges are implicated in subunit movement. Contacts the tRNAs in the A and P-sites. The chain is Small ribosomal subunit protein uS13 from Pseudomonas fluorescens (strain ATCC BAA-477 / NRRL B-23932 / Pf-5).